Reading from the N-terminus, the 189-residue chain is Small ribosomal subunit protein uS5 (189 aa).

An S5 DRBM domain is found at 22–85 (FVDKLVAINR…ESAKRDLIFV (64 aa)).

This sequence belongs to the universal ribosomal protein uS5 family. As to quaternary structure, part of the 30S ribosomal subunit. Contacts proteins S4 and S8.

Functionally, with S4 and S12 plays an important role in translational accuracy. Its function is as follows. Located at the back of the 30S subunit body where it stabilizes the conformation of the head with respect to the body. The chain is Small ribosomal subunit protein uS5 from Agrobacterium fabrum (strain C58 / ATCC 33970) (Agrobacterium tumefaciens (strain C58)).